The primary structure comprises 213 residues: Vacuolar protein sorting-associated protein 32 homolog 1 (213 aa).

Coiled-coil stretches lie at residues 11–42 (KQETSTLQTLDKLNETLEMLEKKENVLLKKAT) and 118–176 (TNID…QLLQ). The disordered stretch occupies residues 180 to 213 (IHVPQGNKPARAPAQKQPTAEEDELAALQAEMAL).

Belongs to the SNF7 family. Component of the endosomal sorting required for transport complex III (ESCRT-III), composed at least of VPS2, VPS20, VPS24 and VPS32. Interacts with SKD1. Interacts with BRO1/ALIX.

The protein localises to the endosome. Component of the ESCRT-III complex, which is required for multivesicular bodies (MVBs) formation and sorting of endosomal cargo proteins into MVBs. The ESCRT-III complex is probably involved in the concentration of MVB cargo. This Arabidopsis thaliana (Mouse-ear cress) protein is Vacuolar protein sorting-associated protein 32 homolog 1 (VPS32.1).